Here is a 484-residue protein sequence, read N- to C-terminus: Probable cytochrome P450 316a1 (484 aa).

Position 433 (cysteine 433) interacts with heme.

It belongs to the cytochrome P450 family. It depends on heme as a cofactor.

The protein resides in the endoplasmic reticulum membrane. The protein localises to the microsome membrane. In terms of biological role, may be involved in the metabolism of insect hormones and in the breakdown of synthetic insecticides. In Drosophila melanogaster (Fruit fly), this protein is Probable cytochrome P450 316a1 (Cyp316a1).